The chain runs to 577 residues: Proline--tRNA ligase (577 aa).

This sequence belongs to the class-II aminoacyl-tRNA synthetase family. ProS type 1 subfamily. As to quaternary structure, homodimer.

It is found in the cytoplasm. The enzyme catalyses tRNA(Pro) + L-proline + ATP = L-prolyl-tRNA(Pro) + AMP + diphosphate. Functionally, catalyzes the attachment of proline to tRNA(Pro) in a two-step reaction: proline is first activated by ATP to form Pro-AMP and then transferred to the acceptor end of tRNA(Pro). As ProRS can inadvertently accommodate and process non-cognate amino acids such as alanine and cysteine, to avoid such errors it has two additional distinct editing activities against alanine. One activity is designated as 'pretransfer' editing and involves the tRNA(Pro)-independent hydrolysis of activated Ala-AMP. The other activity is designated 'posttransfer' editing and involves deacylation of mischarged Ala-tRNA(Pro). The misacylated Cys-tRNA(Pro) is not edited by ProRS. In Chlamydia felis (strain Fe/C-56) (Chlamydophila felis), this protein is Proline--tRNA ligase.